A 536-amino-acid polypeptide reads, in one-letter code: MELTLWTYEGPPHVGAMRIASSMEGVHYVLHAPQGDTYADLLFTMIERRGRRPPVTYTTFQARDLGGDTAELVKGHLREAVERFNPEALLVGESCTAELIQDQPGSLASGMGFNMPVVGIELPAYSKKENWGASETFYQLVRGILSKQPSEESGVSHSPAAWKSEGRRPRVNLLGPTLLGFRCRDDILELEKLLNQHGIDVHVVAPLEARPADLMRLPNADLNVCLYPEIAEATCLWLERNYGMPFSKTVPIGVGATKDFLEELHQLLEMPAPNPGEGAEQSKLPWYSQSVDSNYLTGKRVFIFGDGTHAIAAARIADQELGFKVVGLGTYSREMARPVRAAAKELGLEALISDDYLAVEAAMAEAAPELVLGTQMERHSAKRLGIPCAVISTPMHVQDVPARYSPQMGWEGANVIFDSWVHPLMMGLEEHLIGMFRHDFEFVDGHQSHLGHLGGHQSQTEQQQSQAATNPSTQSNTDSSSEESPLWTPEGEAELAKIPFFVRGKVRRNTEKYARQAGCRRIDSETVYDAKVHFRA.

A [4Fe-4S] cluster-binding site is contributed by aspartate 36. The active-site Proton donor is the aspartate 292. 427 to 428 (GL) provides a ligand contact to substrate. The segment at 447–489 (QSHLGHLGGHQSQTEQQQSQAATNPSTQSNTDSSSEESPLWTP) is disordered. Positions 448–469 (SHLGHLGGHQSQTEQQQSQAAT) are enriched in low complexity. The segment covering 470-483 (NPSTQSNTDSSSEE) has biased composition (polar residues).

This sequence belongs to the ChlB/BchB/BchZ family. In terms of assembly, protochlorophyllide reductase is composed of three subunits; ChlL, ChlN and ChlB. Forms a heterotetramer of two ChlB and two ChlN subunits. The cofactor is [4Fe-4S] cluster.

It catalyses the reaction chlorophyllide a + oxidized 2[4Fe-4S]-[ferredoxin] + 2 ADP + 2 phosphate = protochlorophyllide a + reduced 2[4Fe-4S]-[ferredoxin] + 2 ATP + 2 H2O. Its pathway is porphyrin-containing compound metabolism; chlorophyll biosynthesis (light-independent). Functionally, component of the dark-operative protochlorophyllide reductase (DPOR) that uses Mg-ATP and reduced ferredoxin to reduce ring D of protochlorophyllide (Pchlide) to form chlorophyllide a (Chlide). This reaction is light-independent. The NB-protein (ChlN-ChlB) is the catalytic component of the complex. The protein is Light-independent protochlorophyllide reductase subunit B of Prochlorococcus marinus (strain MIT 9303).